Reading from the N-terminus, the 297-residue chain is Phosphoribosylaminoimidazole-succinocarboxamide synthase (297 aa).

The protein belongs to the SAICAR synthetase family.

It carries out the reaction 5-amino-1-(5-phospho-D-ribosyl)imidazole-4-carboxylate + L-aspartate + ATP = (2S)-2-[5-amino-1-(5-phospho-beta-D-ribosyl)imidazole-4-carboxamido]succinate + ADP + phosphate + 2 H(+). It participates in purine metabolism; IMP biosynthesis via de novo pathway; 5-amino-1-(5-phospho-D-ribosyl)imidazole-4-carboxamide from 5-amino-1-(5-phospho-D-ribosyl)imidazole-4-carboxylate: step 1/2. The protein is Phosphoribosylaminoimidazole-succinocarboxamide synthase of Mycobacteroides abscessus (strain ATCC 19977 / DSM 44196 / CCUG 20993 / CIP 104536 / JCM 13569 / NCTC 13031 / TMC 1543 / L948) (Mycobacterium abscessus).